The primary structure comprises 309 residues: tRNA-cytidine(32) 2-sulfurtransferase (309 aa).

The PP-loop motif motif lies at 57 to 62; the sequence is SGGKDS. The [4Fe-4S] cluster site is built by cysteine 132, cysteine 135, and cysteine 223.

Belongs to the TtcA family. In terms of assembly, homodimer. Mg(2+) is required as a cofactor. [4Fe-4S] cluster serves as cofactor.

The protein localises to the cytoplasm. The enzyme catalyses cytidine(32) in tRNA + S-sulfanyl-L-cysteinyl-[cysteine desulfurase] + AH2 + ATP = 2-thiocytidine(32) in tRNA + L-cysteinyl-[cysteine desulfurase] + A + AMP + diphosphate + H(+). The protein operates within tRNA modification. Catalyzes the ATP-dependent 2-thiolation of cytidine in position 32 of tRNA, to form 2-thiocytidine (s(2)C32). The sulfur atoms are provided by the cysteine/cysteine desulfurase (IscS) system. In Variovorax paradoxus (strain S110), this protein is tRNA-cytidine(32) 2-sulfurtransferase.